The following is a 443-amino-acid chain: Xaa-Pro dipeptidase (443 aa).

Mn(2+) is bound by residues aspartate 246, aspartate 257, histidine 339, glutamate 384, and glutamate 423.

The protein belongs to the peptidase M24B family. Bacterial-type prolidase subfamily. Requires Mn(2+) as cofactor.

It carries out the reaction Xaa-L-Pro dipeptide + H2O = an L-alpha-amino acid + L-proline. Splits dipeptides with a prolyl residue in the C-terminal position. This Escherichia coli O157:H7 protein is Xaa-Pro dipeptidase.